The primary structure comprises 1080 residues: Isoleucine--tRNA ligase (1080 aa).

Residues 48-58 carry the 'HIGH' region motif; sequence PYASGSIHLGT. The 'KMSKS' region motif lies at 628 to 632; the sequence is KMSKS. ATP is bound at residue Lys-631.

The protein belongs to the class-I aminoacyl-tRNA synthetase family. IleS type 2 subfamily. As to quaternary structure, monomer. It depends on Zn(2+) as a cofactor.

Its subcellular location is the cytoplasm. It carries out the reaction tRNA(Ile) + L-isoleucine + ATP = L-isoleucyl-tRNA(Ile) + AMP + diphosphate. In terms of biological role, catalyzes the attachment of isoleucine to tRNA(Ile). As IleRS can inadvertently accommodate and process structurally similar amino acids such as valine, to avoid such errors it has two additional distinct tRNA(Ile)-dependent editing activities. One activity is designated as 'pretransfer' editing and involves the hydrolysis of activated Val-AMP. The other activity is designated 'posttransfer' editing and involves deacylation of mischarged Val-tRNA(Ile). This chain is Isoleucine--tRNA ligase, found in Methanopyrus kandleri (strain AV19 / DSM 6324 / JCM 9639 / NBRC 100938).